The chain runs to 341 residues: tRNA N6-adenosine threonylcarbamoyltransferase (341 aa).

The Fe cation site is built by His111 and His115. Substrate is bound by residues Leu134–Gly138, Asp167, Gly180, and Asn276. Asp304 is a Fe cation binding site.

Belongs to the KAE1 / TsaD family. The cofactor is Fe(2+).

It is found in the cytoplasm. The catalysed reaction is L-threonylcarbamoyladenylate + adenosine(37) in tRNA = N(6)-L-threonylcarbamoyladenosine(37) in tRNA + AMP + H(+). Functionally, required for the formation of a threonylcarbamoyl group on adenosine at position 37 (t(6)A37) in tRNAs that read codons beginning with adenine. Is involved in the transfer of the threonylcarbamoyl moiety of threonylcarbamoyl-AMP (TC-AMP) to the N6 group of A37, together with TsaE and TsaB. TsaD likely plays a direct catalytic role in this reaction. This is tRNA N6-adenosine threonylcarbamoyltransferase from Pseudomonas putida (strain ATCC 47054 / DSM 6125 / CFBP 8728 / NCIMB 11950 / KT2440).